The primary structure comprises 720 residues: MPPPSDIVKVAIEWPGANAQLLEIDQKRPLASIIKEVCDGWSLPNPEYYTLRYADGPQLYITEQTRSDIKNGTILQLAISPSRAARQLMERTQSSNMETRLDAMKELAKLSADVTFATEFINMDGIIVLTRLVESGTKLLSHYSEMLAFTLTAFLELMDHGIVSWDMVSITFIKQIAGYVSQPMVDVSILQRSLAILESMVLNSQSLYQKIAEEITVGQLISHLQVSNQEIQTYAIALINALFLKAPEDKRQDMANAFAQKHLRSIILNHVIRGNRPIKTEMAHQLYVLQVLTFNLLEERMMTKMDPNDQAQRDIIFELRRIAFDAESDPSNAPGSGTEKRKAMYTKDYKMLGFTNHINPAMDFTQTPPGMLALDNMLYLAKVHQDTYIRIVLENSSREDKHECPFGRSAIELTKMLCEILQVGELPNEGRNDYHPMFFTHDRAFEELFGICIQLLNKTWKEMRATAEDFNKVMQVVREQITRALPSKPNSLDQFKSKLRSLSYSEILRLRQSERMSQDDFQSPPIVELREKIQPEILELIKQQRLNRLCEGSSFRKIGNRRRQERFWYCRLALNHKVLHYGDLDDNPQGEVTFESLQEKIPVADIKAIVTGKDCPHMKEKSALKQNKEVLELAFSILYDPDETLNFIAPNKYEYCIWIDGLSALLGKDMSSELTKSDLDTLLSMEMKLRLLDLENIQIPEAPPPIPKEPSSYDFVYHYG.

The residue at position 48 (Tyr-48) is a Phosphotyrosine. In terms of domain architecture, ELMO spans 311–485 (AQRDIIFELR…VVREQITRAL (175 aa)). Ser-503 carries the post-translational modification Phosphoserine. Residues 553-674 (SSFRKIGNRR…LLGKDMSSEL (122 aa)) form the PH domain. Residues 700–707 (PEAPPPIP) carry the SH3-binding motif. Tyr-717 carries the post-translational modification Phosphotyrosine.

In terms of assembly, interacts with the SH3-domain of DOCK1 via its SH3-binding site. Probably part of a complex with DOCK1 and RAC1. Probably part of a complex with DOCK1 and CRK isoform CRK-II. Interacts with ARHGEF16, DOCK4 and EPHA2; mediates activation of RAC1 by EPHA2. Interacts with ADGRB3. Interacts with AUTS2; the interaction is direct. Widely expressed, with a higher expression in skeletal muscle, kidney and placenta.

The protein resides in the cytoplasm. It localises to the cytosol. The protein localises to the membrane. Functionally, involved in cytoskeletal rearrangements required for phagocytosis of apoptotic cells and cell motility. Acts in association with DOCK1 and CRK. Was initially proposed to be required in complex with DOCK1 to activate Rac Rho small GTPases. May enhance the guanine nucleotide exchange factor (GEF) activity of DOCK1. The chain is Engulfment and cell motility protein 2 (ELMO2) from Homo sapiens (Human).